Reading from the N-terminus, the 288-residue chain is Oxaloacetate decarboxylase (288 aa).

Serine 47 contributes to the substrate binding site. Mg(2+) is bound at residue aspartate 85. Residues arginine 156 and histidine 232 each coordinate substrate.

It belongs to the isocitrate lyase/PEP mutase superfamily. Oxaloacetate decarboxylase family. Homotetramer; dimer of dimers. Mg(2+) is required as a cofactor.

The catalysed reaction is oxaloacetate + H(+) = pyruvate + CO2. Its function is as follows. Catalyzes the decarboxylation of oxaloacetate into pyruvate. Seems to play a role in maintaining cellular concentrations of bicarbonate and pyruvate. In Rhodopseudomonas palustris (strain TIE-1), this protein is Oxaloacetate decarboxylase.